The sequence spans 106 residues: Apovitellenin-1 (106 aa).

The signal sequence occupies residues 1–24; the sequence is MVQYRALVIAVILLLSTTVPEVHS.

Belongs to the apovitellenin family. Homodimer; disulfide-linked. As to expression, produced by the liver, secreted into the blood and then sequestred by receptor mediated endocytosis into growing oocytes.

Functionally, protein component of the very low density lipoprotein (VLDL) of egg-laying females. Potent lipoprotein lipase inhibitor, preventing the loss of triglycerides from VLDL on their way from the liver to the growing oocytes. The chain is Apovitellenin-1 from Gallus gallus (Chicken).